The following is a 350-amino-acid chain: Fe-S cluster assembly protein dre2 (350 aa).

The segment at 23 to 156 (TSFNLRTLLL…KPDHSASVAV (134 aa)) is N-terminal SAM-like domain. Residues 157-242 (PLRLRRKDNS…EDTLLTEEDM (86 aa)) form a linker region. Positions 165-209 (NSKTTAVSNAGPPVSTVEVPVSGKRKSVDMTEDVPEKDVPKNDVP) are disordered. Over residues 190–208 (KSVDMTEDVPEKDVPKNDV) the composition is skewed to basic and acidic residues. Positions 252, 263, 266, and 268 each coordinate [2Fe-2S] cluster. The fe-S binding site A stretch occupies residues 252-268 (CAPRAGKRRRACKDCTC). [4Fe-4S] cluster is bound by residues C313, C316, C324, and C327. Short sequence motifs (cx2C motif) lie at residues 313-316 (CGNC) and 324-327 (CDGC). Residues 313–327 (CGNCSLGDAFRCDGC) are fe-S binding site B.

This sequence belongs to the anamorsin family. As to quaternary structure, monomer. Interacts with TAH18. Interacts with MIA40. The cofactor is [2Fe-2S] cluster. [4Fe-4S] cluster serves as cofactor.

It is found in the cytoplasm. The protein localises to the mitochondrion intermembrane space. In terms of biological role, component of the cytosolic iron-sulfur (Fe-S) protein assembly (CIA) machinery required for the maturation of extramitochondrial Fe-S proteins. Part of an electron transfer chain functioning in an early step of cytosolic Fe-S biogenesis, facilitating the de novo assembly of a [4Fe-4S] cluster on the scaffold complex CFD1-NBP35. Electrons are transferred to DRE2 from NADPH via the FAD- and FMN-containing protein TAH18. TAH18-DRE2 are also required for the assembly of the diferric tyrosyl radical cofactor of ribonucleotide reductase (RNR), probably by providing electrons for reduction during radical cofactor maturation in the catalytic small subunit RNR2. The chain is Fe-S cluster assembly protein dre2 from Sclerotinia sclerotiorum (strain ATCC 18683 / 1980 / Ss-1) (White mold).